The chain runs to 294 residues: Ribosomal RNA small subunit methyltransferase H (294 aa).

Residues 36–38, D55, F82, D97, and Q104 contribute to the S-adenosyl-L-methionine site; that span reads GGH. The tract at residues 265 to 285 is disordered; the sequence is KPTVATDDEQNRNPRSRSAKW.

This sequence belongs to the methyltransferase superfamily. RsmH family.

Its subcellular location is the cytoplasm. The enzyme catalyses cytidine(1402) in 16S rRNA + S-adenosyl-L-methionine = N(4)-methylcytidine(1402) in 16S rRNA + S-adenosyl-L-homocysteine + H(+). Functionally, specifically methylates the N4 position of cytidine in position 1402 (C1402) of 16S rRNA. The sequence is that of Ribosomal RNA small subunit methyltransferase H from Synechococcus sp. (strain CC9902).